A 546-amino-acid chain; its full sequence is Amidophosphoribosyltransferase (546 aa).

Residues 1 to 26 (MSAPQQQQQSQQKQQQHVRVVEQQQV) show a composition bias toward low complexity. The interval 1 to 39 (MSAPQQQQQSQQKQQQHVRVVEQQQVEPAEAVTSSMESE) is disordered. The propeptide occupies 1–53 (MSAPQQQQQSQQKQQQHVRVVEQQQVEPAEAVTSSMESESISASKELTGLTHE). The active-site Nucleophile is cysteine 54. Residues 54–302 (CGVFGAIACG…PGEIVELSRS (249 aa)) enclose the Glutamine amidotransferase type-2 domain. Serine 113 bears the Phosphoserine mark. Position 114 is a phosphothreonine (threonine 114). Serine 120 carries the phosphoserine modification. [4Fe-4S] cluster is bound at residue cysteine 321. Serine 368, aspartate 430, and aspartate 431 together coordinate Mg(2+). Residues cysteine 467, cysteine 528, and cysteine 531 each contribute to the [4Fe-4S] cluster site.

In the C-terminal section; belongs to the purine/pyrimidine phosphoribosyltransferase family. Mg(2+) is required as a cofactor. Requires [4Fe-4S] cluster as cofactor.

It catalyses the reaction 5-phospho-beta-D-ribosylamine + L-glutamate + diphosphate = 5-phospho-alpha-D-ribose 1-diphosphate + L-glutamine + H2O. It participates in purine metabolism; IMP biosynthesis via de novo pathway; N(1)-(5-phospho-D-ribosyl)glycinamide from 5-phospho-alpha-D-ribose 1-diphosphate: step 1/2. Its function is as follows. Involved in the first step (and regulatory point) of the de novo biosynthesis of purine nucleotides, where it catalyzes the transfer of glutamine amide to 5-phospho-alpha-D-ribose 1-diphosphate. The protein is Amidophosphoribosyltransferase (Prat) of Drosophila melanogaster (Fruit fly).